Consider the following 135-residue polypeptide: Putative nickel-responsive regulator (135 aa).

Residues His79, His90, His92, and Cys98 each coordinate Ni(2+).

Belongs to the transcriptional regulatory CopG/NikR family. It depends on Ni(2+) as a cofactor.

Transcriptional regulator. This is Putative nickel-responsive regulator from Dictyoglomus turgidum (strain DSM 6724 / Z-1310).